We begin with the raw amino-acid sequence, 84 residues long: Large ribosomal subunit protein bL27 (84 aa).

The interval 1 to 22 (MAKTKAGGSTKNGRDSAGRRLG) is disordered.

It belongs to the bacterial ribosomal protein bL27 family.

The chain is Large ribosomal subunit protein bL27 from Mesomycoplasma hyopneumoniae (strain 232) (Mycoplasma hyopneumoniae).